A 619-amino-acid polypeptide reads, in one-letter code: 1-deoxy-D-xylulose-5-phosphate synthase (619 aa).

Residues His-74 and Gly-115–Ser-117 contribute to the thiamine diphosphate site. Asp-146 serves as a coordination point for Mg(2+). Residues Gly-147 to Ala-148, Asn-175, and Tyr-285 contribute to the thiamine diphosphate site. Mg(2+) is bound at residue Asn-175. Residues Glu-289 to Lys-310 are disordered. Residue Glu-365 participates in thiamine diphosphate binding.

Belongs to the transketolase family. DXPS subfamily. Homodimer. Mg(2+) serves as cofactor. It depends on thiamine diphosphate as a cofactor.

It catalyses the reaction D-glyceraldehyde 3-phosphate + pyruvate + H(+) = 1-deoxy-D-xylulose 5-phosphate + CO2. The protein operates within metabolic intermediate biosynthesis; 1-deoxy-D-xylulose 5-phosphate biosynthesis; 1-deoxy-D-xylulose 5-phosphate from D-glyceraldehyde 3-phosphate and pyruvate: step 1/1. Functionally, catalyzes the acyloin condensation reaction between C atoms 2 and 3 of pyruvate and glyceraldehyde 3-phosphate to yield 1-deoxy-D-xylulose-5-phosphate (DXP). The sequence is that of 1-deoxy-D-xylulose-5-phosphate synthase from Clostridium botulinum (strain Alaska E43 / Type E3).